We begin with the raw amino-acid sequence, 364 residues long: Probable UDP-arabinopyranose mutase 4 (364 aa).

Residues 106-108 (DDD) carry the DXD motif motif. Arg-154 carries N-linked (Glc...) arginine glycosylation.

It belongs to the RGP family. In terms of assembly, heteromers with RGP1 and RGP2. Mn(2+) is required as a cofactor. Requires Mg(2+) as cofactor. Reversibly glycosylated in vitro by UDP-glucose, UDP-xylose and UDP-galactose, but not UDP-mannose. As to expression, specifically expressed in developing seeds.

The protein resides in the cytoplasm. Its subcellular location is the cytosol. It is found in the golgi apparatus. The enzyme catalyses UDP-beta-L-arabinofuranose = UDP-beta-L-arabinopyranose. In terms of biological role, probable UDP-L-arabinose mutase involved in the biosynthesis of cell wall non-cellulosic polysaccharides. In Arabidopsis thaliana (Mouse-ear cress), this protein is Probable UDP-arabinopyranose mutase 4.